The following is a 572-amino-acid chain: Putative lysozyme-like protein (572 aa).

The N-terminal stretch at 1-17 (MRLLLVLLALIFSVVSA) is a signal peptide. Over residues 145 to 165 (MSSSGSSSSSGSSGSSSSSSG) the composition is skewed to low complexity. Disordered regions lie at residues 145 to 199 (MSSS…HGGG), 231 to 297 (SSSS…GGGV), 326 to 388 (ANSV…GERK), and 433 to 469 (AGSSSSSGSSGSSSSSSSSGSSGGSSGGSSGGGGGSG). Residues 166–185 (SSGGGSSGGGSGGGGGGSGL) are compositionally biased toward gly residues. Over residues 231-240 (SSSSADAGSS) the composition is skewed to low complexity. Positions 258–282 (STGGTGGSSGSSGGGSGGGGGGSGL) are enriched in gly residues. The segment covering 326 to 358 (ANSVSSLAGSMSSSGSSSSSGSSGSSSSSSSSG) has biased composition (low complexity). Gly residues predominate over residues 359–382 (SSGGSSGGGSSGGGSGGGGGGSGL). Residues 433-452 (AGSSSSSGSSGSSSSSSSSG) are compositionally biased toward low complexity. Over residues 453 to 469 (SSGGSSGGSSGGGGGSG) the composition is skewed to gly residues.

It belongs to the dictyostelium lysozyme family.

This is Putative lysozyme-like protein (alyL) from Dictyostelium discoideum (Social amoeba).